A 678-amino-acid chain; its full sequence is Translation factor GUF1 homolog, chloroplastic (678 aa).

The transit peptide at 1–43 directs the protein to the chloroplast; it reads MASILLSLNTHTLLPLHTRTRTTKTTLKILRFSHKLPPSSPFY. Residues 81–262 form the tr-type G domain; sequence KNIRNFCIIA…AIVERVPPPR (182 aa). Residues 90–97, 155–159, and 209–212 each bind GTP; these read AHIDHGKS, DTPGH, and NKID.

The protein belongs to the TRAFAC class translation factor GTPase superfamily. Classic translation factor GTPase family. LepA subfamily.

The protein resides in the plastid. It localises to the chloroplast. The catalysed reaction is GTP + H2O = GDP + phosphate + H(+). Its function is as follows. Promotes chloroplast protein synthesis. May act as a fidelity factor of the translation reaction, by catalyzing a one-codon backward translocation of tRNAs on improperly translocated ribosomes. In Populus trichocarpa (Western balsam poplar), this protein is Translation factor GUF1 homolog, chloroplastic.